The sequence spans 138 residues: ATP synthase epsilon chain, chloroplastic (138 aa).

It belongs to the ATPase epsilon chain family. As to quaternary structure, F-type ATPases have 2 components, CF(1) - the catalytic core - and CF(0) - the membrane proton channel. CF(1) has five subunits: alpha(3), beta(3), gamma(1), delta(1), epsilon(1). CF(0) has three main subunits: a, b and c.

It is found in the plastid. The protein localises to the chloroplast thylakoid membrane. Its function is as follows. Produces ATP from ADP in the presence of a proton gradient across the membrane. The sequence is that of ATP synthase epsilon chain, chloroplastic from Anthoceros angustus (Hornwort).